Reading from the N-terminus, the 295-residue chain is Tyrosine recombinase XerC (295 aa).

One can recognise a Core-binding (CB) domain in the interval 1–85 (MLTALNRYWD…ALRRFLSFLV (85 aa)). The 180-residue stretch at 106-285 (HLPKNMDGEQ…NFQHLAEVYD (180 aa)) folds into the Tyr recombinase domain. Residues Arg-145, Lys-169, His-237, Arg-240, and His-263 contribute to the active site. Residue Tyr-272 is the O-(3'-phospho-DNA)-tyrosine intermediate of the active site.

The protein belongs to the 'phage' integrase family. XerC subfamily. As to quaternary structure, forms a cyclic heterotetrameric complex composed of two molecules of XerC and two molecules of XerD.

Its subcellular location is the cytoplasm. Site-specific tyrosine recombinase, which acts by catalyzing the cutting and rejoining of the recombining DNA molecules. The XerC-XerD complex is essential to convert dimers of the bacterial chromosome into monomers to permit their segregation at cell division. It also contributes to the segregational stability of plasmids. This is Tyrosine recombinase XerC from Haemophilus influenzae (strain 86-028NP).